Here is a 300-residue protein sequence, read N- to C-terminus: Ribonuclease HIII (300 aa).

The region spanning 83–300 (IPIIGSDEVG…THKAQALLTK (218 aa)) is the RNase H type-2 domain. A divalent metal cation contacts are provided by aspartate 89, glutamate 90, and aspartate 194.

Belongs to the RNase HII family. RnhC subfamily. Requires Mn(2+) as cofactor. It depends on Mg(2+) as a cofactor.

Its subcellular location is the cytoplasm. It carries out the reaction Endonucleolytic cleavage to 5'-phosphomonoester.. Functionally, endonuclease that specifically degrades the RNA of RNA-DNA hybrids. This chain is Ribonuclease HIII, found in Streptococcus pyogenes serotype M2 (strain MGAS10270).